We begin with the raw amino-acid sequence, 407 residues long: Putative aspartate aminotransferase, cytoplasmic 2 (407 aa).

Lysine 249 carries the N6-(pyridoxal phosphate)lysine modification.

Belongs to the class-I pyridoxal-phosphate-dependent aminotransferase family. Homodimer. It depends on pyridoxal 5'-phosphate as a cofactor.

Its subcellular location is the cytoplasm. The enzyme catalyses L-aspartate + 2-oxoglutarate = oxaloacetate + L-glutamate. This chain is Putative aspartate aminotransferase, cytoplasmic 2 (GOT1L1), found in Bos taurus (Bovine).